Consider the following 242-residue polypeptide: MTLNPLVQFDIKKLIEIKIFGFDISFTNSSIYMLLASILALTYFYLAFYNWKLVPSRLQVSAEIVYNLVADMLNQNIGAKGHKFIPLFFSLFIFILFCNLLGMTPYSFTVTSHIIVTFALAILVFLTITIVGFVKHSLRFLTLFLPHGTPLWLAPLMIVIELFTYLARPISLSLRLAANMMAGHVLLKVIASFTISLMIYLKFISIPLMVILIGFEIFIAVLQAYIFTILSCMYLNDAINLH.

6 consecutive transmembrane segments (helical) span residues 31-51 (IYML…FYNW), 84-104 (FIPL…LGMT), 114-134 (IIVT…VGFV), 140-160 (FLTL…MIVI), 189-209 (VIAS…IPLM), and 210-230 (VILI…FTIL).

Belongs to the ATPase A chain family. As to quaternary structure, F-type ATPases have 2 components, CF(1) - the catalytic core - and CF(0) - the membrane proton channel. CF(1) has five subunits: alpha(3), beta(3), gamma(1), delta(1), epsilon(1). CF(0) has three main subunits: a(1), b(2) and c(9-12). The alpha and beta chains form an alternating ring which encloses part of the gamma chain. CF(1) is attached to CF(0) by a central stalk formed by the gamma and epsilon chains, while a peripheral stalk is formed by the delta and b chains.

Its subcellular location is the cell inner membrane. Key component of the proton channel; it plays a direct role in the translocation of protons across the membrane. This Rickettsia canadensis (strain McKiel) protein is ATP synthase subunit a.